Here is a 204-residue protein sequence, read N- to C-terminus: Anthranilate synthase component 2 (204 aa).

A Glutamine amidotransferase type-1 domain is found at 3 to 204 (RLVVVDNFDS…LTAVAGFDVA (202 aa)). 58-60 (GPG) contributes to the L-glutamine binding site. The Nucleophile; for GATase activity role is filled by Cys88. 138 to 139 (SL) lines the L-glutamine pocket. Catalysis depends on for GATase activity residues His178 and Glu180.

As to quaternary structure, heterotetramer consisting of two non-identical subunits: a beta subunit (TrpG) and a large alpha subunit (TrpE).

The enzyme catalyses chorismate + L-glutamine = anthranilate + pyruvate + L-glutamate + H(+). It functions in the pathway amino-acid biosynthesis; L-tryptophan biosynthesis; L-tryptophan from chorismate: step 1/5. Part of a heterotetrameric complex that catalyzes the two-step biosynthesis of anthranilate, an intermediate in the biosynthesis of L-tryptophan. In the first step, the glutamine-binding beta subunit (TrpG) of anthranilate synthase (AS) provides the glutamine amidotransferase activity which generates ammonia as a substrate that, along with chorismate, is used in the second step, catalyzed by the large alpha subunit of AS (TrpE) to produce anthranilate. In the absence of TrpG, TrpE can synthesize anthranilate directly from chorismate and high concentrations of ammonia. This Haloferax volcanii (strain ATCC 29605 / DSM 3757 / JCM 8879 / NBRC 14742 / NCIMB 2012 / VKM B-1768 / DS2) (Halobacterium volcanii) protein is Anthranilate synthase component 2 (trpG).